The following is a 395-amino-acid chain: GDP-mannose 4,6 dehydratase (395 aa).

Polar residues-rich tracts occupy residues 1-13 and 24-36; these read MLNT…STSD and ESSS…QNGT. The tract at residues 1–44 is disordered; it reads MLNTRLIAMSTSDGAPETKKQRPESSSNGSKDQNGTEAGAEGDS. NADP(+) is bound by residues 53 to 58, 109 to 110, 131 to 135, and Tyr146; these read GITGQD, DM, and LAAQS. Thr178 is a catalytic residue. Active-site nucleophile residues include Glu180 and Tyr202. NADP(+) is bound by residues Lys206, His232, and Arg237.

Belongs to the NAD(P)-dependent epimerase/dehydratase family. GDP-mannose 4,6-dehydratase subfamily. It depends on NADP(+) as a cofactor.

The enzyme catalyses GDP-alpha-D-mannose = GDP-4-dehydro-alpha-D-rhamnose + H2O. It functions in the pathway nucleotide-sugar biosynthesis; GDP-L-fucose biosynthesis via de novo pathway; GDP-L-fucose from GDP-alpha-D-mannose: step 1/2. Functionally, catalyzes the conversion of GDP-D-mannose to GDP-4-dehydro-6-deoxy-D-mannose (also known as GDP-4-keto-6-deoxy-D-mannose or GDP-4-dehydro-alpha-D-rhamnose), an essential step in the synthesis of GDP-fucose from GDP-mannose. This Drosophila melanogaster (Fruit fly) protein is GDP-mannose 4,6 dehydratase (Gmd).